The chain runs to 3483 residues: Nonribosomal peptide synthetase Ao415 (3483 aa).

Positions 281 to 669 (TFKKLNETSN…DVHPLIKDVV (389 aa)) are adenylation 1. The 77-residue stretch at 775–851 (EVFDELSTKI…GLRDHVSGKK (77 aa)) folds into the Carrier 1 domain. Position 812 is an O-(pantetheine 4'-phosphoryl)serine (S812). The segment at 886-1297 (ANVLPCSPMQ…YCLLHMLQNQ (412 aa)) is condensation 1. An adenylation 2 region spans residues 1363–1758 (TYRQFDDMGN…SADKDVAEIV (396 aa)). In terms of domain architecture, Carrier 2 spans 1865-1941 (EELSETEKVI…SLAKALSSAN (77 aa)). An O-(pantetheine 4'-phosphoryl)serine modification is found at S1901. Residues 1981-2379 (IKPCTPLQEG…LLKNPEQEVA (399 aa)) form a condensation 2 region. The Carrier 3 domain maps to 2412–2485 (TEAAVSIRRE…RMVVYLSSTK (74 aa)). O-(pantetheine 4'-phosphoryl)serine is present on S2446. Positions 2520 to 2917 (ESILPTTPLQ…MLQKIIGNPL (398 aa)) are condensation 3. The 77-residue stretch at 2954–3030 (DNYQNLERQV…KICLFLDKKQ (77 aa)) folds into the Carrier 4 domain. At S2991 the chain carries O-(pantetheine 4'-phosphoryl)serine. Residues 3084–3368 (SEGRIFLPTF…VQEDLLKIST (285 aa)) are condensation 4.

Belongs to the NRP synthetase family.

It participates in siderophore biosynthesis. Functionally, nonribosomal peptide synthetase; part of the gene cluster that mediates the biosynthesis of desferriferrichrome that chelates Fe(3+) to form ferrichrome. Fe(3+) is a key factor for induction of trap formation and the fungus uses the iron chelating desferriferrichrome to sequester Fe(3+) to inhibit trap formation and increase nematicidal activity. The biosynthesis of desferriferrichrome requires the action of the L-ornithine N(5)-oxygenase (LOO) Ao414 that hydroxylates L-ornithine at N(5), resulting in the formation of N(5)-hydroxyl-L-ornithine, which is subsequently N-acetylated to yield N(5)-acetyl-N(5)-hydroxy-L-ornithine (L-AHO). L-AHO harbors one hydroxamate moiety, which is the key core responsible for chelating iron. Then, L-AHO is further condensated with glycines to form desferriferrichrome through the NRPS protein Ao415. This Arthrobotrys oligospora (strain ATCC 24927 / CBS 115.81 / DSM 1491) (Nematode-trapping fungus) protein is Nonribosomal peptide synthetase Ao415.